The primary structure comprises 932 residues: Protocadherin gamma-A8 (932 aa).

The first 29 residues, 1 to 29, serve as a signal peptide directing secretion; it reads MAAPQSRPRRGELILLCALLGTLWEIGRG. Cadherin domains lie at 30–133, 134–242, 243–347, 348–452, 453–562, and 570–682; these read QIRY…NPKF, QVED…APVF, PHPI…RPEV, IITS…PPTF, PHAS…APEI, and DGST…KPSV. At 30–692 the chain is on the extracellular side; that stretch reads QIRYSVPEET…DPNDSSLTLY (663 aa). N-linked (GlcNAc...) asparagine glycosylation is present at Asn47. 3 N-linked (GlcNAc...) asparagine glycosylation sites follow: Asn414, Asn419, and Asn545. Residue Asn685 is glycosylated (N-linked (GlcNAc...) asparagine). The helical transmembrane segment at 693-713 threads the bilayer; sequence LVVAVAAISCVFLAFVAVLLG. Over 714–932 the chain is Cytoplasmic; it reads LRLRRWHKSH…KKKSGKKEKK (219 aa). Disordered stretches follow at residues 804 to 841 and 902 to 932; these read ADHGQQAPPNTDWRFSQAQRPGTSGSQNGDDTGTWPNN and ATLTNAAGKRDGKAPAGGNGNKKKSGKKEKK. The segment covering 810-841 has biased composition (polar residues); sequence APPNTDWRFSQAQRPGTSGSQNGDDTGTWPNN. The span at 922–932 shows a compositional bias: basic residues; that stretch reads NKKKSGKKEKK.

The protein resides in the cell membrane. In terms of biological role, potential calcium-dependent cell-adhesion protein. May be involved in the establishment and maintenance of specific neuronal connections in the brain. The chain is Protocadherin gamma-A8 (PCDHGA8) from Pan troglodytes (Chimpanzee).